The following is a 125-amino-acid chain: Succinate dehydrogenase assembly factor 3, mitochondrial (125 aa).

The transit peptide at Met-1–Leu-30 directs the protein to the mitochondrion.

It belongs to the complex I LYR family. SDHAF3 subfamily. As to quaternary structure, interacts with Sdhb within an Sdha-Sdhb subcomplex.

The protein localises to the mitochondrion matrix. Plays an essential role in the assembly of succinate dehydrogenase (SDH), an enzyme complex (also referred to as respiratory complex II) that is a component of both the tricarboxylic acid (TCA) cycle and the mitochondrial electron transport chain, and which couples the oxidation of succinate to fumarate with the reduction of ubiquinone (coenzyme Q) to ubiquinol. Promotes maturation of the iron-sulfur protein subunit Sdhb of the SDH catalytic dimer, protecting it from the deleterious effects of oxidants. May act together with SDHAF1. In Rattus norvegicus (Rat), this protein is Succinate dehydrogenase assembly factor 3, mitochondrial.